The following is a 156-amino-acid chain: 6,7-dimethyl-8-ribityllumazine synthase (156 aa).

Residues F23, 57–59 (SFE), and 81–83 (AVI) contribute to the 5-amino-6-(D-ribitylamino)uracil site. (2S)-2-hydroxy-3-oxobutyl phosphate is bound at residue 86 to 87 (GT). Catalysis depends on H89, which acts as the Proton donor. F114 lines the 5-amino-6-(D-ribitylamino)uracil pocket. R128 lines the (2S)-2-hydroxy-3-oxobutyl phosphate pocket.

This sequence belongs to the DMRL synthase family. Forms an icosahedral capsid composed of 60 subunits, arranged as a dodecamer of pentamers.

The enzyme catalyses (2S)-2-hydroxy-3-oxobutyl phosphate + 5-amino-6-(D-ribitylamino)uracil = 6,7-dimethyl-8-(1-D-ribityl)lumazine + phosphate + 2 H2O + H(+). It participates in cofactor biosynthesis; riboflavin biosynthesis; riboflavin from 2-hydroxy-3-oxobutyl phosphate and 5-amino-6-(D-ribitylamino)uracil: step 1/2. Catalyzes the formation of 6,7-dimethyl-8-ribityllumazine by condensation of 5-amino-6-(D-ribitylamino)uracil with 3,4-dihydroxy-2-butanone 4-phosphate. This is the penultimate step in the biosynthesis of riboflavin. The chain is 6,7-dimethyl-8-ribityllumazine synthase from Alkalilimnicola ehrlichii (strain ATCC BAA-1101 / DSM 17681 / MLHE-1).